The following is a 433-amino-acid chain: PHO85 cyclin-10 (433 aa).

The span at 1–10 (MDMTKNHTTD) shows a compositional bias: basic and acidic residues. Disordered regions lie at residues 1-20 (MDMT…GDIR) and 51-81 (LTSE…TTDS). Over residues 51–63 (LTSEWDQSRSNTP) the composition is skewed to polar residues.

The protein belongs to the cyclin family. PHO80 subfamily. As to quaternary structure, forms a cyclin-CDK complex with PHO85. Interacts with GSY2, independent of the presence of PHO85.

The protein localises to the cytoplasm. Its function is as follows. Cyclin partner of the cyclin-dependent kinase (CDK) PHO85. Together with cyclin PCL8, negatively controls glycogen accumulation under favorable growth conditions. The PCL10-PHO85 cyclin-CDK holoenzyme has glycogen synthase kinase activity and phosphorylates and negatively regulates glycogen synthase GSY2. Also has minor GLC8 kinase activity. The sequence is that of PHO85 cyclin-10 (PCL10) from Saccharomyces cerevisiae (strain ATCC 204508 / S288c) (Baker's yeast).